The following is a 186-amino-acid chain: MRKSEIERETKETYVKILLNLDGSGSFLGDFPVPYYKHLFSAFCFYAEWDVEIMAKGDVEVDPHHLIEDTGIVWGKAFYSAVSNSNFLRFSSKIVPMDEALVMAVVDISGRPYLEIRDDKGILNGRLIKEFLRGFVNNSQITLHIWLLSGENLHHIEEAIFKALGLALGEASKEVPNLKSTKGKIW.

The protein belongs to the imidazoleglycerol-phosphate dehydratase family.

The protein resides in the cytoplasm. It catalyses the reaction D-erythro-1-(imidazol-4-yl)glycerol 3-phosphate = 3-(imidazol-4-yl)-2-oxopropyl phosphate + H2O. It participates in amino-acid biosynthesis; L-histidine biosynthesis; L-histidine from 5-phospho-alpha-D-ribose 1-diphosphate: step 6/9. This is Imidazoleglycerol-phosphate dehydratase from Dictyoglomus turgidum (strain DSM 6724 / Z-1310).